Reading from the N-terminus, the 802-residue chain is Penicillin G acylase (802 aa).

An N-terminal signal peptide occupies residues methionine 1 to alanine 24. Residue glutamate 177 coordinates Ca(2+). Residues serine 235–glycine 265 constitute a propeptide, spacer peptide. Catalysis depends on serine 266, which acts as the Nucleophile. Position 341 (aspartate 341) interacts with Ca(2+).

The protein belongs to the peptidase S45 family. Heterodimer of an alpha subunit and a beta subunit processed from the same precursor. It depends on Ca(2+) as a cofactor.

It is found in the secreted. The catalysed reaction is a penicillin + H2O = 6-aminopenicillanate + a carboxylate. The chain is Penicillin G acylase (pac) from Priestia megaterium (Bacillus megaterium).